The following is a 185-amino-acid chain: Threonylcarbamoyl-AMP synthase (185 aa).

Positions 4-185 constitute a YrdC-like domain; the sequence is SFRAQCAARV…LVTGQVIRPA (182 aa).

It belongs to the SUA5 family. TsaC subfamily.

It is found in the cytoplasm. It carries out the reaction L-threonine + hydrogencarbonate + ATP = L-threonylcarbamoyladenylate + diphosphate + H2O. Functionally, required for the formation of a threonylcarbamoyl group on adenosine at position 37 (t(6)A37) in tRNAs that read codons beginning with adenine. Catalyzes the conversion of L-threonine, HCO(3)(-)/CO(2) and ATP to give threonylcarbamoyl-AMP (TC-AMP) as the acyladenylate intermediate, with the release of diphosphate. The protein is Threonylcarbamoyl-AMP synthase of Pseudomonas paraeruginosa (strain DSM 24068 / PA7) (Pseudomonas aeruginosa (strain PA7)).